A 546-amino-acid polypeptide reads, in one-letter code: Probable malate:quinone oxidoreductase (546 aa).

Belongs to the MQO family. The cofactor is FAD.

The enzyme catalyses (S)-malate + a quinone = a quinol + oxaloacetate. It participates in carbohydrate metabolism; tricarboxylic acid cycle; oxaloacetate from (S)-malate (quinone route): step 1/1. The sequence is that of Probable malate:quinone oxidoreductase from Acinetobacter baumannii (strain AB0057).